The chain runs to 145 residues: D-aminoacyl-tRNA deacylase (145 aa).

The short motif at 137-138 (GP) is the Gly-cisPro motif, important for rejection of L-amino acids element.

This sequence belongs to the DTD family. In terms of assembly, homodimer.

It localises to the cytoplasm. It carries out the reaction glycyl-tRNA(Ala) + H2O = tRNA(Ala) + glycine + H(+). The catalysed reaction is a D-aminoacyl-tRNA + H2O = a tRNA + a D-alpha-amino acid + H(+). Its function is as follows. An aminoacyl-tRNA editing enzyme that deacylates mischarged D-aminoacyl-tRNAs. Also deacylates mischarged glycyl-tRNA(Ala), protecting cells against glycine mischarging by AlaRS. Acts via tRNA-based rather than protein-based catalysis; rejects L-amino acids rather than detecting D-amino acids in the active site. By recycling D-aminoacyl-tRNA to D-amino acids and free tRNA molecules, this enzyme counteracts the toxicity associated with the formation of D-aminoacyl-tRNA entities in vivo and helps enforce protein L-homochirality. In Ectopseudomonas mendocina (strain ymp) (Pseudomonas mendocina), this protein is D-aminoacyl-tRNA deacylase.